A 196-amino-acid chain; its full sequence is HTH-type transcriptional regulator BetI (196 aa).

An HTH tetR-type domain is found at 8–68 (PIRRSQLIAA…ATMRHLMQAL (61 aa)). Residues 31-50 (SIAYIARLAGVSNGIISHYF) constitute a DNA-binding region (H-T-H motif).

Its pathway is amine and polyamine biosynthesis; betaine biosynthesis via choline pathway [regulation]. Its function is as follows. Repressor involved in the biosynthesis of the osmoprotectant glycine betaine. It represses transcription of the choline transporter BetT and the genes of BetAB involved in the synthesis of glycine betaine. The protein is HTH-type transcriptional regulator BetI of Ectopseudomonas mendocina (strain ymp) (Pseudomonas mendocina).